The chain runs to 466 residues: Uronate isomerase (466 aa).

This sequence belongs to the metallo-dependent hydrolases superfamily. Uronate isomerase family.

It carries out the reaction D-glucuronate = D-fructuronate. The enzyme catalyses aldehydo-D-galacturonate = keto-D-tagaturonate. It participates in carbohydrate metabolism; pentose and glucuronate interconversion. This is Uronate isomerase from Caldanaerobacter subterraneus subsp. tengcongensis (strain DSM 15242 / JCM 11007 / NBRC 100824 / MB4) (Thermoanaerobacter tengcongensis).